Reading from the N-terminus, the 294-residue chain is Enoyl-CoA hydratase domain-containing protein 3, mitochondrial (294 aa).

Residues 1 to 61 (MSWLRSCGER…IILNNPQQRN (61 aa)) constitute a mitochondrion transit peptide.

This sequence belongs to the enoyl-CoA hydratase/isomerase family.

It localises to the mitochondrion. Functionally, may play a role in fatty acid biosynthesis and insulin sensitivity. This Xenopus laevis (African clawed frog) protein is Enoyl-CoA hydratase domain-containing protein 3, mitochondrial (echdc3).